The sequence spans 404 residues: S-adenosylmethionine synthase (404 aa).

Residue 141–146 coordinates ATP; sequence GQGSVD.

The protein belongs to the AdoMet synthase 2 family. Mg(2+) serves as cofactor.

It carries out the reaction L-methionine + ATP + H2O = S-adenosyl-L-methionine + phosphate + diphosphate. The protein operates within amino-acid biosynthesis; S-adenosyl-L-methionine biosynthesis; S-adenosyl-L-methionine from L-methionine: step 1/1. Its function is as follows. Catalyzes the formation of S-adenosylmethionine from methionine and ATP. This Methanococcus vannielii (strain ATCC 35089 / DSM 1224 / JCM 13029 / OCM 148 / SB) protein is S-adenosylmethionine synthase.